A 262-amino-acid polypeptide reads, in one-letter code: Adenosylcobinamide-GDP ribazoletransferase (262 aa).

Transmembrane regions (helical) follow at residues 43–63, 121–141, 145–165, and 195–215; these read PLAG…LGAI, VALI…LPLL, GGGV…VWHW, and GVIL…AVLL.

Belongs to the CobS family. The cofactor is Mg(2+).

The protein localises to the cell inner membrane. It catalyses the reaction alpha-ribazole + adenosylcob(III)inamide-GDP = adenosylcob(III)alamin + GMP + H(+). It carries out the reaction alpha-ribazole 5'-phosphate + adenosylcob(III)inamide-GDP = adenosylcob(III)alamin 5'-phosphate + GMP + H(+). Its pathway is cofactor biosynthesis; adenosylcobalamin biosynthesis; adenosylcobalamin from cob(II)yrinate a,c-diamide: step 7/7. Its function is as follows. Joins adenosylcobinamide-GDP and alpha-ribazole to generate adenosylcobalamin (Ado-cobalamin). Also synthesizes adenosylcobalamin 5'-phosphate from adenosylcobinamide-GDP and alpha-ribazole 5'-phosphate. This Sinorhizobium medicae (strain WSM419) (Ensifer medicae) protein is Adenosylcobinamide-GDP ribazoletransferase.